The sequence spans 296 residues: NAD kinase (296 aa).

The active-site Proton acceptor is Asp74. Residues 74-75 (DG), 148-149 (ND), Arg176, Asp178, and 189-194 (TAYALS) each bind NAD(+).

The protein belongs to the NAD kinase family. A divalent metal cation serves as cofactor.

The protein localises to the cytoplasm. It catalyses the reaction NAD(+) + ATP = ADP + NADP(+) + H(+). Involved in the regulation of the intracellular balance of NAD and NADP, and is a key enzyme in the biosynthesis of NADP. Catalyzes specifically the phosphorylation on 2'-hydroxyl of the adenosine moiety of NAD to yield NADP. This is NAD kinase from Nitrosomonas europaea (strain ATCC 19718 / CIP 103999 / KCTC 2705 / NBRC 14298).